Consider the following 1000-residue polypeptide: SEC23-interacting protein (1000 aa).

An interaction with SEC23A region spans residues 1-367; that stretch reads MAERKPNGGS…YTEEFSEKLE (367 aa). The disordered stretch occupies residues 133–252; the sequence is FSPSISKAQP…QQVPARPGAP (120 aa). The span at 154–167 shows a compositional bias: low complexity; that stretch reads SYLPSQPSSLPPSY. Pro residues predominate over residues 207–218; it reads PGPPAHPPPSGP. The segment covering 235 to 246 has biased composition (low complexity); sequence SSVQSPAQQQVP. The SAM domain occupies 644 to 707; that stretch reads KEVLTLQETL…NFVEHKAAKL (64 aa). The disordered stretch occupies residues 716 to 748; the sequence is AVAATSTKGQEQSAQKTKDMASLPSESNEPKRK. Residues serine 737 and serine 926 each carry the phosphoserine modification. One can recognise a DDHD domain in the interval 779-989; that stretch reads LDFEPEIFFA…ALLLLKEIYR (211 aa).

The protein belongs to the PA-PLA1 family. Interacts with SEC23A. In terms of tissue distribution, ubiquitously expressed with stronger levels detected in heart, liver and skeletal muscle.

It localises to the cytoplasmic vesicle. The protein localises to the COPII-coated vesicle membrane. Its subcellular location is the endoplasmic reticulum. In terms of biological role, plays a role in the organization of endoplasmic reticulum exit sites. Specifically binds to phosphatidylinositol 3-phosphate (PI(3)P), phosphatidylinositol 4-phosphate (PI(4)P) and phosphatidylinositol 5-phosphate (PI(5)P). The protein is SEC23-interacting protein (SEC23IP) of Homo sapiens (Human).